We begin with the raw amino-acid sequence, 178 residues long: MSAPTKRENDRARINEQITVPEVRLIDVDGNQAGIVSTREALRAAEESGLDLVEISPTAKPPVCRIMDYGKFLFELSKKQAEARKKQKQIQVKELKFRPTTEDGDYQVKLRNLIRFLNHGDKVKITLRFRGREMAHQELGMKILERLQADTADVAVVEQHAKREGRQLLMVLSPKKTK.

This sequence belongs to the IF-3 family. In terms of assembly, monomer.

It localises to the cytoplasm. IF-3 binds to the 30S ribosomal subunit and shifts the equilibrium between 70S ribosomes and their 50S and 30S subunits in favor of the free subunits, thus enhancing the availability of 30S subunits on which protein synthesis initiation begins. The sequence is that of Translation initiation factor IF-3 from Legionella pneumophila (strain Paris).